The primary structure comprises 194 residues: Putative manganese efflux pump MntP (194 aa).

Helical transmembrane passes span 3–23, 40–60, 65–85, 109–129, 134–154, and 169–189; these read FYAT…VAVC, GFIF…LGLY, IIQW…GRMI, LIAT…GLAF, IVHT…LGML, and IIGG…HLDL.

Belongs to the MntP (TC 9.B.29) family.

The protein localises to the cell inner membrane. Its function is as follows. Probably functions as a manganese efflux pump. The sequence is that of Putative manganese efflux pump MntP from Proteus mirabilis (strain HI4320).